Here is a 430-residue protein sequence, read N- to C-terminus: Cyclin-A2 (430 aa).

At Met-1 the chain carries N-acetylmethionine. Disordered stretches follow at residues 1 to 80 (MLGS…PIND) and 106 to 129 (EEIQ…FNSA). A Phosphoserine modification is found at Ser-5. Basic and acidic residues predominate over residues 107 to 120 (EIQKRPTESKKSES).

It belongs to the cyclin family. Cyclin AB subfamily. As to quaternary structure, interacts with the CDK1 and CDK2 protein kinases to form serine/threonine kinase holoenzyme complexes. Interacts with CDK1 (hyperphosphorylated form in G1 and underphosphorylated forms in S and G2). Interacts with CDK2; the interaction increases from G1 to G2. Interacts (associated with CDK2 but not with CDK1) with SCAPER; regulates the activity of CCNA2/CDK2 by transiently maintaining CCNA2 in the cytoplasm. Forms a ternary complex with CDK2 and CDKN1B; CDKN1B inhibits the kinase activity of CDK2 through conformational rearrangements. Interacts with INCA1. Polyubiquitinated via 'Lys-11'-linked ubiquitin by the anaphase-promoting complex (APC/C), leading to its degradation by the proteasome. Deubiquitinated and stabilized by USP37 enables entry into S phase. Ubiquitinated during the G1 phase by the SCF(FBXO31) complex, leading to its proteasomal degradation.

It localises to the nucleus. The protein resides in the cytoplasm. Functionally, cyclin which controls both the G1/S and the G2/M transition phases of the cell cycle. Functions through the formation of specific serine/threonine kinase holoenzyme complexes with the cyclin-dependent protein kinases CDK1 and CDK2. The cyclin subunit confers the substrate specificity of these complexes and differentially interacts with and activates CDK1 and CDK2 throughout the cell cycle. The sequence is that of Cyclin-A2 from Bos taurus (Bovine).